The chain runs to 33 residues: Photosystem II reaction center protein Psb30 (33 aa).

A helical membrane pass occupies residues 5-25 (LIAQLTFLTSIIVSGPLVIAL).

It belongs to the Psb30/Ycf12 family. In terms of assembly, PSII is composed of 1 copy each of membrane proteins PsbA, PsbB, PsbC, PsbD, PsbE, PsbF, PsbH, PsbI, PsbJ, PsbK, PsbL, PsbM, PsbT, PsbX, PsbY, PsbZ, Psb30/Ycf12, peripheral proteins of the oxygen-evolving complex and a large number of cofactors. It forms dimeric complexes.

The protein localises to the plastid. The protein resides in the chloroplast thylakoid membrane. Functionally, a core subunit of photosystem II (PSII), probably helps stabilize the reaction center. This is Photosystem II reaction center protein Psb30 from Psilotum nudum (Whisk fern).